A 101-amino-acid polypeptide reads, in one-letter code: Urease subunit beta (101 aa).

It belongs to the urease beta subunit family. As to quaternary structure, heterotrimer of UreA (gamma), UreB (beta) and UreC (alpha) subunits. Three heterotrimers associate to form the active enzyme.

The protein localises to the cytoplasm. The enzyme catalyses urea + 2 H2O + H(+) = hydrogencarbonate + 2 NH4(+). The protein operates within nitrogen metabolism; urea degradation; CO(2) and NH(3) from urea (urease route): step 1/1. The protein is Urease subunit beta of Paraburkholderia xenovorans (strain LB400).